The primary structure comprises 24 residues: Humanin-like 9 (24 aa).

The protein belongs to the humanin family. In terms of tissue distribution, highly expressed in the kidney, heart muscle and testis.

The protein resides in the secreted. The protein localises to the cytoplasm. Functionally, plays a role as a neuroprotective and antiapoptotic factor. The polypeptide is Humanin-like 9 (Homo sapiens (Human)).